We begin with the raw amino-acid sequence, 683 residues long: uncharacterized protein (683 aa).

3 coiled-coil regions span residues 62–124 (PEHY…RKER), 155–259 (TTTN…KLSQ), and 346–376 (KKSLLTVKDSVQSLKTQLDELKRTLENDGDV). The tract at residues 213–237 (QDQVESQTGPKKRRKSPIENQPTAG) is disordered.

This is an uncharacterized protein from Invertebrate iridescent virus 3 (IIV-3).